The primary structure comprises 287 residues: Pantothenate synthetase (287 aa).

Residue 30–37 (MGNLHSGH) coordinates ATP. Histidine 37 functions as the Proton donor in the catalytic mechanism. Glutamine 61 serves as a coordination point for (R)-pantoate. Glutamine 61 lines the beta-alanine pocket. 149–152 (GEKD) contacts ATP. Glutamine 155 serves as a coordination point for (R)-pantoate. ATP-binding positions include valine 178 and 186-189 (LSSR).

It belongs to the pantothenate synthetase family. Homodimer.

The protein resides in the cytoplasm. The catalysed reaction is (R)-pantoate + beta-alanine + ATP = (R)-pantothenate + AMP + diphosphate + H(+). It functions in the pathway cofactor biosynthesis; (R)-pantothenate biosynthesis; (R)-pantothenate from (R)-pantoate and beta-alanine: step 1/1. Its function is as follows. Catalyzes the condensation of pantoate with beta-alanine in an ATP-dependent reaction via a pantoyl-adenylate intermediate. The chain is Pantothenate synthetase from Pseudomonas entomophila (strain L48).